Reading from the N-terminus, the 78-residue chain is MASLIQVRDLLALQGRMEAMQISRTLHTPQPMIDAMLNQLENMGRAVRIQEDPDGCLSGSCKSCPEGKACLREWWTLR.

The iron-sulfur cluster site is built by C56, C61, C64, and C70.

This sequence belongs to the FeoC family.

Functionally, may function as a transcriptional regulator that controls feoABC expression. This is Probable [Fe-S]-dependent transcriptional repressor from Citrobacter koseri (strain ATCC BAA-895 / CDC 4225-83 / SGSC4696).